The following is a 331-amino-acid chain: Ketol-acid reductoisomerase (NADP(+)) (331 aa).

One can recognise a KARI N-terminal Rossmann domain in the interval 2-182; it reads AKLFYDSDAD…GGTRAGILET (181 aa). Residues 25–28, serine 51, serine 53, and 83–86 each bind NADP(+); these read YGSQ and DEFQ. The active site involves histidine 108. An NADP(+)-binding site is contributed by glycine 134. The KARI C-terminal knotted domain maps to 183–328; that stretch reads NFKEETETDL…KTLRSMFSWL (146 aa). Positions 191, 195, 227, and 231 each coordinate Mg(2+). Serine 252 provides a ligand contact to substrate.

Belongs to the ketol-acid reductoisomerase family. The cofactor is Mg(2+).

The catalysed reaction is (2R)-2,3-dihydroxy-3-methylbutanoate + NADP(+) = (2S)-2-acetolactate + NADPH + H(+). It catalyses the reaction (2R,3R)-2,3-dihydroxy-3-methylpentanoate + NADP(+) = (S)-2-ethyl-2-hydroxy-3-oxobutanoate + NADPH + H(+). It functions in the pathway amino-acid biosynthesis; L-isoleucine biosynthesis; L-isoleucine from 2-oxobutanoate: step 2/4. It participates in amino-acid biosynthesis; L-valine biosynthesis; L-valine from pyruvate: step 2/4. In terms of biological role, involved in the biosynthesis of branched-chain amino acids (BCAA). Catalyzes an alkyl-migration followed by a ketol-acid reduction of (S)-2-acetolactate (S2AL) to yield (R)-2,3-dihydroxy-isovalerate. In the isomerase reaction, S2AL is rearranged via a Mg-dependent methyl migration to produce 3-hydroxy-3-methyl-2-ketobutyrate (HMKB). In the reductase reaction, this 2-ketoacid undergoes a metal-dependent reduction by NADPH to yield (R)-2,3-dihydroxy-isovalerate. This chain is Ketol-acid reductoisomerase (NADP(+)), found in Prochlorococcus marinus (strain NATL2A).